Consider the following 239-residue polypeptide: Large ribosomal subunit protein uL1 (239 aa).

The protein belongs to the universal ribosomal protein uL1 family. Part of the 50S ribosomal subunit.

Its function is as follows. Binds directly to 23S rRNA. The L1 stalk is quite mobile in the ribosome, and is involved in E site tRNA release. In terms of biological role, protein L1 is also a translational repressor protein, it controls the translation of the L11 operon by binding to its mRNA. The protein is Large ribosomal subunit protein uL1 of Rhodococcus erythropolis (strain PR4 / NBRC 100887).